Here is a 408-residue protein sequence, read N- to C-terminus: Multidrug resistance protein MdtG (408 aa).

10 helical membrane-spanning segments follow: residues 13–33 (LYIA…VMPF), 51–71 (LWSG…SPFW), 89–109 (LGMA…QFLL), 112–132 (AALG…AIQV), 138–158 (GWAL…GPLL), 170–190 (PVFF…FFFI), 221–241 (LFVT…ILTL), 253–273 (LAFI…LSAP), 287–307 (ILVA…FVQS), and 375–395 (AVFL…WLSL).

This sequence belongs to the major facilitator superfamily. DHA1 family. MdtG (TC 2.A.1.2.20) subfamily.

It localises to the cell inner membrane. The protein is Multidrug resistance protein MdtG of Dickeya zeae (strain Ech586) (Dickeya dadantii (strain Ech586)).